We begin with the raw amino-acid sequence, 487 residues long: Malonate-semialdehyde dehydrogenase 2 (487 aa).

5 residues coordinate NAD(+): Phe154, Lys178, Glu181, Arg182, and Ser231. The Nucleophile role is filled by Cys286. Glu386 is a binding site for NAD(+).

This sequence belongs to the aldehyde dehydrogenase family. IolA subfamily. Homotetramer.

It catalyses the reaction 3-oxopropanoate + NAD(+) + CoA + H2O = hydrogencarbonate + acetyl-CoA + NADH + H(+). The enzyme catalyses 2-methyl-3-oxopropanoate + NAD(+) + CoA + H2O = propanoyl-CoA + hydrogencarbonate + NADH + H(+). It functions in the pathway polyol metabolism; myo-inositol degradation into acetyl-CoA; acetyl-CoA from myo-inositol: step 7/7. Catalyzes the oxidation of malonate semialdehyde (MSA) and methylmalonate semialdehyde (MMSA) into acetyl-CoA and propanoyl-CoA, respectively. Is involved in a myo-inositol catabolic pathway. Bicarbonate, and not CO2, is the end-product of the enzymatic reaction. This chain is Malonate-semialdehyde dehydrogenase 2, found in Bacillus anthracis.